Here is a 2271-residue protein sequence, read N- to C-terminus: Serine-rich adhesin for platelets (2271 aa).

An N-terminal signal peptide occupies residues 1-89 (MSKRQKAFHD…VNMLHDQQAF (89 aa)). A serine-rich repeat region 1, SRR1 region spans residues 90–230 (AASDAPLTSE…KTSTTSTSTA (141 aa)). Polar residues predominate over residues 100 to 111 (LNTQSETVGNQN). Disordered stretches follow at residues 100-229 (LNTQ…STST), 751-791 (NSMS…VVST), and 806-2243 (SVSA…GLLG). Residues 112–128 (STTIEASTSTADSTSVT) are compositionally biased toward low complexity. A compositionally biased stretch (polar residues) spans 129 to 140 (KNSSSVQTSNSD). Residues 150-229 (VTSTTNSTSN…NKTSTTSTST (80 aa)) show a composition bias toward low complexity. The interval 231–751 (PVKLRTFSRL…TTFKYEVTRN (521 aa)) is non-repeat region (NRR). Composition is skewed to low complexity over residues 752–791 (SMSD…VVST), 806–1392 (SVSA…LSLS), and 1402–2214 (SNSA…ATSE). The tract at residues 752 to 2232 (SMSDSVSTSG…AQSEKRLPDT (1481 aa)) is serine-rich repeat region 2, SRR2. Positions 2229–2233 (LPDTG) match the LPXTG sorting signal motif. A Pentaglycyl murein peptidoglycan amidated threonine modification is found at Thr2232. Residues 2233–2271 (GDSIKQNGLLGGVMTLLVGLGLMKRKKKKDENDQDDSQA) constitute a propeptide, removed by sortase.

It belongs to the serine-rich repeat protein (SRRP) family. Post-translationally, proteolytically cleaved by a metalloprotease. Glycosylated. It is probable that most of the Ser residues in SSR1 and SSR2 are O-GlcNAcylated. Sequential glycosylation by sugar transferases are able to generate complex sugar polymorphisms.

The protein resides in the secreted. The protein localises to the cell wall. Functionally, mediates binding to human platelets, possibly through a receptor-ligand interaction. Probably associated with virulence in endovascular infection. This Staphylococcus aureus (strain Mu50 / ATCC 700699) protein is Serine-rich adhesin for platelets (sraP).